The chain runs to 246 residues: uncharacterized protein (246 aa).

S194 carries the post-translational modification Phosphoserine.

This is an uncharacterized protein from Schizosaccharomyces pombe (strain 972 / ATCC 24843) (Fission yeast).